Here is a 210-residue protein sequence, read N- to C-terminus: Redox-sensing transcriptional repressor Rex (210 aa).

The H-T-H motif DNA-binding region spans 17–56 (KYHRYLNELMKNDVDRISSKELGEKIGFTASQIRQDLNCF). 91–96 (GAGNIG) contributes to the NAD(+) binding site.

The protein belongs to the transcriptional regulatory Rex family. Homodimer.

Its subcellular location is the cytoplasm. In terms of biological role, modulates transcription in response to changes in cellular NADH/NAD(+) redox state. In Clostridium botulinum (strain Alaska E43 / Type E3), this protein is Redox-sensing transcriptional repressor Rex.